Here is a 497-residue protein sequence, read N- to C-terminus: Malonate-semialdehyde dehydrogenase (497 aa).

NAD(+) is bound by residues F148, K172, E175, R176, and S225. The active-site Nucleophile is the C280. E382 lines the NAD(+) pocket.

This sequence belongs to the aldehyde dehydrogenase family.

It carries out the reaction 3-oxopropanoate + NAD(+) + CoA + H2O = hydrogencarbonate + acetyl-CoA + NADH + H(+). Its function is as follows. Involved in the degradation of beta-alanine. Likely catalyzes the NAD(+)- and CoA-dependent oxidative decarboxylation of malonate semialdehyde (3-oxopropanoate) to acetyl-CoA. This Pseudomonas aeruginosa (strain ATCC 15692 / DSM 22644 / CIP 104116 / JCM 14847 / LMG 12228 / 1C / PRS 101 / PAO1) protein is Malonate-semialdehyde dehydrogenase.